We begin with the raw amino-acid sequence, 172 residues long: Disulfide bond formation protein B (172 aa).

Over 1–16 (MNLFASLNQFSKNRIS) the chain is Cytoplasmic. A helical membrane pass occupies residues 17 to 33 (WLLLLLFVVFFEGAALF). Topologically, residues 34-51 (FQHVMMLSPCVMCIYERV) are periplasmic. An intrachain disulfide couples Cys43 to Cys46. A helical transmembrane segment spans residues 52–67 (AMLGVGGAALFGLIAP). The Cytoplasmic segment spans residues 68–74 (NNPLVRW). A helical transmembrane segment spans residues 75–92 (LGLAAWGASAYKGLALSL). At 93–147 (QHVDYQFNPSPFATCDLFVTFPDWAPLNQWAPWMFEAYGDCSKIVWQFMTLSMPQ) the chain is on the periplasmic side. Cys107 and Cys133 are disulfide-bonded. A helical membrane pass occupies residues 148-166 (WLVIIFAGNLVALAFIVIA). Topologically, residues 167 to 172 (QFFKSK) are cytoplasmic.

It belongs to the DsbB family.

Its subcellular location is the cell inner membrane. Functionally, required for disulfide bond formation in some periplasmic proteins. Acts by oxidizing the DsbA protein. This is Disulfide bond formation protein B from Vibrio vulnificus (strain CMCP6).